Reading from the N-terminus, the 225-residue chain is RNA chaperone ProQ (225 aa).

The disordered stretch occupies residues 107-169; the sequence is KARVQAQRAA…VAAKAPREER (63 aa). Positions 109–118 are enriched in low complexity; the sequence is RVQAQRAAQQ. Residues 137–146 are compositionally biased toward basic residues; sequence RERKPRPQQP. Over residues 147-156 the composition is skewed to basic and acidic residues; the sequence is RRKEGAEQRK.

It belongs to the ProQ family.

The protein localises to the cytoplasm. Functionally, RNA chaperone with significant RNA binding, RNA strand exchange and RNA duplexing activities. May regulate ProP activity through an RNA-based, post-transcriptional mechanism. The chain is RNA chaperone ProQ from Klebsiella pneumoniae subsp. pneumoniae (strain ATCC 700721 / MGH 78578).